The chain runs to 74 residues: Exodeoxyribonuclease 7 small subunit (74 aa).

This sequence belongs to the XseB family. In terms of assembly, heterooligomer composed of large and small subunits.

It is found in the cytoplasm. It carries out the reaction Exonucleolytic cleavage in either 5'- to 3'- or 3'- to 5'-direction to yield nucleoside 5'-phosphates.. In terms of biological role, bidirectionally degrades single-stranded DNA into large acid-insoluble oligonucleotides, which are then degraded further into small acid-soluble oligonucleotides. The polypeptide is Exodeoxyribonuclease 7 small subunit (Neisseria gonorrhoeae (strain ATCC 700825 / FA 1090)).